The primary structure comprises 105 residues: Secreted RxLR effector protein 158 (105 aa).

The first 22 residues, 1–22 (MRGAHYVAIVLLVAAGGQTAAG), serve as a signal peptide directing secretion. The RxLR-dEER motif lies at 50 to 71 (RALQASRNPKDDLMFSAGDEER).

It belongs to the RxLR effector family.

Its subcellular location is the secreted. It is found in the host nucleus. The protein localises to the host cytoplasm. In terms of biological role, secreted effector that partially suppresses the host cell death induced by cell death-inducing proteins. The chain is Secreted RxLR effector protein 158 from Plasmopara viticola (Downy mildew of grapevine).